Consider the following 386-residue polypeptide: Mannitol-1-phosphate 5-dehydrogenase (386 aa).

NAD(+) is bound at residue 4-15; the sequence is AVHFGAGNIGRG.

This sequence belongs to the mannitol dehydrogenase family.

The enzyme catalyses D-mannitol 1-phosphate + NAD(+) = beta-D-fructose 6-phosphate + NADH + H(+). The protein is Mannitol-1-phosphate 5-dehydrogenase of Oceanobacillus iheyensis (strain DSM 14371 / CIP 107618 / JCM 11309 / KCTC 3954 / HTE831).